A 603-amino-acid chain; its full sequence is Arginine--tRNA ligase (603 aa).

Residues Pro-143–His-153 carry the 'HIGH' region motif.

Belongs to the class-I aminoacyl-tRNA synthetase family. As to quaternary structure, monomer.

Its subcellular location is the cytoplasm. The enzyme catalyses tRNA(Arg) + L-arginine + ATP = L-arginyl-tRNA(Arg) + AMP + diphosphate. This Prochlorococcus marinus (strain MIT 9303) protein is Arginine--tRNA ligase.